Here is a 462-residue protein sequence, read N- to C-terminus: MSNGIIVQVIGAVVDVQFPQDAVPKVYDALKIVSEGQSKGLVMEVQQQIGGGVVRCIAMGTSDGLRRGAEVSNTGEAIKVPVGMKTLGRIMNVLGEPVDEQGPIGAEDNWVIHREAPSYEDQSSATELLETGIKVIDLICPFAKGGKVGLFGGAGVGKTVNMMELINNIAKAHSGLSVFAGVGERTREGNDFYYEMKESNVLDKVAMVYGQMNEPPGNRLRVALTGLTMAEKFRDEGRDVLLFIDNIYRYTLAGTEVSALLGRMPSAVGYQPTLAEEMGVLQERITSTKTGSITSIQAVYVPADDLTDPSPATTFAHLDSTVTLSRQIAALGIYPAVDPLDSTSRQLDPLVVGQEHYETARGVQTVLQRYKELKDIIAILGMDELSEDDKLVVARARKIERFLSQPFNVAEVFTGSPGKYVTLKETIRGFKGILDGEYDDLPEQAFYMVGSIDEVVEKAKKL.

Residue 152–159 participates in ATP binding; that stretch reads GGAGVGKT.

It belongs to the ATPase alpha/beta chains family. F-type ATPases have 2 components, CF(1) - the catalytic core - and CF(0) - the membrane proton channel. CF(1) has five subunits: alpha(3), beta(3), gamma(1), delta(1), epsilon(1). CF(0) has three main subunits: a(1), b(2) and c(9-12). The alpha and beta chains form an alternating ring which encloses part of the gamma chain. CF(1) is attached to CF(0) by a central stalk formed by the gamma and epsilon chains, while a peripheral stalk is formed by the delta and b chains.

The protein localises to the cell inner membrane. The enzyme catalyses ATP + H2O + 4 H(+)(in) = ADP + phosphate + 5 H(+)(out). In terms of biological role, produces ATP from ADP in the presence of a proton gradient across the membrane. The catalytic sites are hosted primarily by the beta subunits. This is ATP synthase subunit beta from Tolumonas auensis (strain DSM 9187 / NBRC 110442 / TA 4).